The primary structure comprises 241 residues: Uridylate kinase (241 aa).

Position 15–18 (15–18 (KLSG)) interacts with ATP. An involved in allosteric activation by GTP region spans residues 23–28 (GTEGFG). Gly57 contacts UMP. Residues Gly58 and Arg62 each contribute to the ATP site. UMP-binding positions include Asp77 and 138-145 (TGNPFFTT). Positions 165, 171, and 174 each coordinate ATP.

Belongs to the UMP kinase family. In terms of assembly, homohexamer.

Its subcellular location is the cytoplasm. The enzyme catalyses UMP + ATP = UDP + ADP. The protein operates within pyrimidine metabolism; CTP biosynthesis via de novo pathway; UDP from UMP (UMPK route): step 1/1. Its activity is regulated as follows. Allosterically activated by GTP. Inhibited by UTP. Its function is as follows. Catalyzes the reversible phosphorylation of UMP to UDP. This is Uridylate kinase from Pectobacterium atrosepticum (strain SCRI 1043 / ATCC BAA-672) (Erwinia carotovora subsp. atroseptica).